Consider the following 78-residue polypeptide: Exodeoxyribonuclease 7 small subunit (78 aa).

Belongs to the XseB family. Heterooligomer composed of large and small subunits.

It is found in the cytoplasm. The catalysed reaction is Exonucleolytic cleavage in either 5'- to 3'- or 3'- to 5'-direction to yield nucleoside 5'-phosphates.. Its function is as follows. Bidirectionally degrades single-stranded DNA into large acid-insoluble oligonucleotides, which are then degraded further into small acid-soluble oligonucleotides. The protein is Exodeoxyribonuclease 7 small subunit of Mycobacterium leprae (strain TN).